The chain runs to 359 residues: Stearoyl-CoA desaturase (359 aa).

The Cytoplasmic portion of the chain corresponds to 1–72 (MPAHLLQEEI…EGPRPKLEYV (72 aa)). The helical transmembrane segment at 73–93 (WRNIILMSLLHLGALYGIILI) threads the bilayer. Asn75 lines the substrate pocket. At 94–97 (PTCK) the chain is on the lumenal side. The chain crosses the membrane as a helical span at residues 98–118 (IYTLLWAFAYYLLSAVGVTAG). Topologically, residues 119–217 (AHRLWSHRTY…EKLVMFQRRY (99 aa)) are cytoplasmic. Residues His120 and His125 each coordinate Fe cation. Residues 120-125 (HRLWSH) carry the Histidine box-1 motif. Residues Asn148, Arg155, and Asp156 each coordinate substrate. His157, His160, and His161 together coordinate Fe cation. The Histidine box-2 signature appears at 157–161 (HRAHH). Substrate contacts are provided by Arg188 and Lys189. A Phosphoserine modification is found at Ser203. A helical transmembrane segment spans residues 218 to 237 (YKPGILLMCFILPTIVPWYC). Residues 238–241 (WGEA) lie on the Lumenal side of the membrane. Residues 242-263 (FPQSLFVATFLRYAIVLNATWL) traverse the membrane as a helical segment. Trp262 lines the substrate pocket. Residues 264-359 (VNSAAHLYGY…RTGDESYKSG (96 aa)) are Cytoplasmic-facing. Residues His269, His298, His301, and His302 each contribute to the Fe cation site. A Histidine box-3 motif is present at residues 298–302 (HNYHH).

The protein belongs to the fatty acid desaturase type 1 family. The cofactor is Fe(2+).

Its subcellular location is the endoplasmic reticulum membrane. The enzyme catalyses octadecanoyl-CoA + 2 Fe(II)-[cytochrome b5] + O2 + 2 H(+) = (9Z)-octadecenoyl-CoA + 2 Fe(III)-[cytochrome b5] + 2 H2O. It catalyses the reaction hexadecanoyl-CoA + 2 Fe(II)-[cytochrome b5] + O2 + 2 H(+) = (9Z)-hexadecenoyl-CoA + 2 Fe(III)-[cytochrome b5] + 2 H2O. Functionally, stearoyl-CoA desaturase that utilizes O(2) and electrons from reduced cytochrome b5 to introduce the first double bond into saturated fatty acyl-CoA substrates. Catalyzes the insertion of a cis double bond at the delta-9 position into fatty acyl-CoA substrates including palmitoyl-CoA and stearoyl-CoA. Gives rise to a mixture of 16:1 and 18:1 unsaturated fatty acids. Plays an important role in lipid biosynthesis. Plays an important role in regulating the expression of genes that are involved in lipogenesis and in regulating mitochondrial fatty acid oxidation. Plays an important role in body energy homeostasis. Contributes to the biosynthesis of membrane phospholipids, cholesterol esters and triglycerides. The sequence is that of Stearoyl-CoA desaturase (SCD) from Sus scrofa (Pig).